Here is a 620-residue protein sequence, read N- to C-terminus: UvrABC system protein C (620 aa).

Positions 13-92 constitute a GIY-YIG domain; it reads DKPGVYIMKN…IKKYSPRYNI (80 aa). The 36-residue stretch at 204-239 folds into the UVR domain; the sequence is TSIIKKLKLEMEKAAEELEFEKAAKIRDRILAIELI.

The protein belongs to the UvrC family. Interacts with UvrB in an incision complex.

The protein localises to the cytoplasm. In terms of biological role, the UvrABC repair system catalyzes the recognition and processing of DNA lesions. UvrC both incises the 5' and 3' sides of the lesion. The N-terminal half is responsible for the 3' incision and the C-terminal half is responsible for the 5' incision. This is UvrABC system protein C from Clostridium perfringens (strain ATCC 13124 / DSM 756 / JCM 1290 / NCIMB 6125 / NCTC 8237 / Type A).